Reading from the N-terminus, the 297-residue chain is Homoserine kinase (297 aa).

ATP is bound at residue 82–92 (PVSRGLGSSAA).

Belongs to the GHMP kinase family. Homoserine kinase subfamily.

The protein localises to the cytoplasm. It catalyses the reaction L-homoserine + ATP = O-phospho-L-homoserine + ADP + H(+). It participates in amino-acid biosynthesis; L-threonine biosynthesis; L-threonine from L-aspartate: step 4/5. Its function is as follows. Catalyzes the ATP-dependent phosphorylation of L-homoserine to L-homoserine phosphate. This is Homoserine kinase from Clostridium botulinum (strain 657 / Type Ba4).